Reading from the N-terminus, the 880-residue chain is Alanine--tRNA ligase (880 aa).

His-566, His-570, Cys-668, and His-672 together coordinate Zn(2+).

It belongs to the class-II aminoacyl-tRNA synthetase family. It depends on Zn(2+) as a cofactor.

The protein localises to the cytoplasm. The enzyme catalyses tRNA(Ala) + L-alanine + ATP = L-alanyl-tRNA(Ala) + AMP + diphosphate. Functionally, catalyzes the attachment of alanine to tRNA(Ala) in a two-step reaction: alanine is first activated by ATP to form Ala-AMP and then transferred to the acceptor end of tRNA(Ala). Also edits incorrectly charged Ser-tRNA(Ala) and Gly-tRNA(Ala) via its editing domain. The polypeptide is Alanine--tRNA ligase (Nostoc sp. (strain PCC 7120 / SAG 25.82 / UTEX 2576)).